The following is a 350-amino-acid chain: MGVTSTAPHLLRAARGEIVDRPPVWMMRQAGRYMKAYRDLREKYPSFRDRSEIPEVAIEVSLQPWKAFQPDGVILFSDIVTPLPGLGIEMDIAEGKGPIIHAPIRTQAQIEQLRPLEPEAALPFIKTILQALRQEVGHQSTVLGFVGAPWTLAAYAVEGKGSKTYSIIKNLAFSEPAILHQLLTKLADAIAIYARYQIDSGAQVVQMFDSWAGQLSPQDYDTFALPYQQRVFQQIKQTHPDTPLILLVSGSAGVLERMGQSGADIVTVDWTVDMADARARLGKQMKVQGNLDPGVLYASKQFIRDRIIDTVRKAGNWGHILNLGHGVLPDTPEENVAFFFETAKQLNVLV.

Substrate is bound by residues Arg28–Arg32, Asp78, Tyr155, Ser210, and His325.

Belongs to the uroporphyrinogen decarboxylase family. As to quaternary structure, homodimer.

The protein localises to the cytoplasm. It carries out the reaction uroporphyrinogen III + 4 H(+) = coproporphyrinogen III + 4 CO2. The protein operates within porphyrin-containing compound metabolism; protoporphyrin-IX biosynthesis; coproporphyrinogen-III from 5-aminolevulinate: step 4/4. Catalyzes the decarboxylation of four acetate groups of uroporphyrinogen-III to yield coproporphyrinogen-III. This chain is Uroporphyrinogen decarboxylase, found in Trichormus variabilis (strain ATCC 29413 / PCC 7937) (Anabaena variabilis).